The primary structure comprises 53 residues: uncharacterized protein (53 aa).

It is found in the mitochondrion. This is an uncharacterized protein from Saccharomyces cerevisiae (strain ATCC 204508 / S288c) (Baker's yeast).